Consider the following 517-residue polypeptide: Cytochrome P450 monooxygenase TRI4 (517 aa).

The chain crosses the membrane as a helical span at residues 15–37 (AVGAAVAVGALYFFCQCFYNLYL). The N-linked (GlcNAc...) asparagine glycan is linked to Asn444. Cys452 lines the heme pocket.

The protein belongs to the cytochrome P450 family. It depends on heme as a cofactor.

It localises to the membrane. It participates in sesquiterpene biosynthesis; trichothecene biosynthesis. Functionally, cytochrome P450 monooxygenase; part of the gene cluster that mediates the production of the antimicrobial trichothecene harzianum A (HA) that plays a role in Botrytis cinerea antagonistic activity and plant defense priming. The biosynthesis of harzianum A begins with the cyclization of farnesyl diphosphate to trichodiene and is catalyzed by the trichodiene synthase TRI5. Trichodiene undergoes a series of oxygenations catalyzed by the cytochrome P450 monooxygenase TRI4. TRI4 controls the addition of 3 oxygens at C-2, C-11, and the C-12, C-13-epoxide to form the intermediate isotrichodiol. Isotrichodiol then undergoes a non-enzymatic isomerization and cyclization to form 12,13-epoxytrichothec-9-ene (EPT) which is further converted to trichodermol by the cytochrome P450 monooxygenase TRI11 via C-4 hydroxylation. The last step of HA synthesis is esterification of an octatriendioyl moiety to the C-4 oxygen of trichodermol. The octatriendioyl moiety is probably produced by the polyketide synthase TRI17 and the esterification performed by the trichothecene O-acetyltransferase TRI3. This Trichoderma arundinaceum protein is Cytochrome P450 monooxygenase TRI4.